The sequence spans 289 residues: Pantothenate synthetase (289 aa).

ATP is bound at residue 33-40 (MGNLHDGH). H40 (proton donor) is an active-site residue. Q64 serves as a coordination point for (R)-pantoate. Q64 contributes to the beta-alanine binding site. 155–158 (GKKD) provides a ligand contact to ATP. (R)-pantoate is bound at residue Q161. Residues A184 and 192 to 195 (LSSR) each bind ATP.

Belongs to the pantothenate synthetase family. As to quaternary structure, homodimer.

The protein localises to the cytoplasm. The catalysed reaction is (R)-pantoate + beta-alanine + ATP = (R)-pantothenate + AMP + diphosphate + H(+). The protein operates within cofactor biosynthesis; (R)-pantothenate biosynthesis; (R)-pantothenate from (R)-pantoate and beta-alanine: step 1/1. In terms of biological role, catalyzes the condensation of pantoate with beta-alanine in an ATP-dependent reaction via a pantoyl-adenylate intermediate. This is Pantothenate synthetase from Acidovorax sp. (strain JS42).